Here is a 147-residue protein sequence, read N- to C-terminus: Hemoglobin subunit epsilon (147 aa).

In terms of domain architecture, Globin spans 3–147 (HFTAEEKSTI…VATALAHKYH (145 aa)). Phosphoserine is present on residues Ser-14 and Ser-51. The heme b site is built by His-64 and His-93.

Belongs to the globin family. In terms of assembly, heterotetramer of two alpha chains and two epsilon chains in early embryonic hemoglobin Gower-2; two zeta chains and two epsilon chains in early embryonic hemoglobin Gower-1. As to expression, red blood cells.

The epsilon chain is a beta-type chain of early mammalian embryonic hemoglobin. This is Hemoglobin subunit epsilon (HBE1) from Propithecus verreauxi (White sifaka).